The sequence spans 305 residues: Homoserine O-acetyltransferase (305 aa).

The active-site Acyl-thioester intermediate is C142. Residues K163 and S192 each contribute to the substrate site. H235 serves as the catalytic Proton acceptor. E237 is a catalytic residue. Position 249 (R249) interacts with substrate.

This sequence belongs to the MetA family.

It is found in the cytoplasm. It catalyses the reaction L-homoserine + acetyl-CoA = O-acetyl-L-homoserine + CoA. The protein operates within amino-acid biosynthesis; L-methionine biosynthesis via de novo pathway; O-acetyl-L-homoserine from L-homoserine: step 1/1. Functionally, transfers an acetyl group from acetyl-CoA to L-homoserine, forming acetyl-L-homoserine. This chain is Homoserine O-acetyltransferase, found in Bacteroides thetaiotaomicron (strain ATCC 29148 / DSM 2079 / JCM 5827 / CCUG 10774 / NCTC 10582 / VPI-5482 / E50).